The primary structure comprises 427 residues: Trigger factor (427 aa).

In terms of domain architecture, PPIase FKBP-type spans 163–248 (GDTVVIDFVG…VNEVKAKELP (86 aa)).

It belongs to the FKBP-type PPIase family. Tig subfamily.

It localises to the cytoplasm. The enzyme catalyses [protein]-peptidylproline (omega=180) = [protein]-peptidylproline (omega=0). In terms of biological role, involved in protein export. Acts as a chaperone by maintaining the newly synthesized protein in an open conformation. Functions as a peptidyl-prolyl cis-trans isomerase. The polypeptide is Trigger factor (Lactococcus lactis subsp. cremoris (strain MG1363)).